A 182-amino-acid polypeptide reads, in one-letter code: Late embryogenesis abundant protein 3 (182 aa).

Positions 1-51 (MAQHQHSPQRPRDQDNTRPHDQYGIVFSVSGDDVARKQGDSFSQPDPTVAT) are disordered. Residues 7–11 (SPQRP) carry the Nuclear localization signal (NLS) motif. Basic and acidic residues predominate over residues 10–21 (RPRDQDNTRPHD). SMP domains lie at 58-115 (VTIG…TNEQ) and 123-181 (VNIA…LNQQ). The tract at residues 145-182 (EDAEAVVGAELRSSSEMKTTPGGVADSMSAGARLNQQL) is disordered.

Belongs to the LEA type SMP family.

Its subcellular location is the cytoplasm. It is found in the nucleus. LEA proteins are late embryonic proteins abundant in higher plant seed embryos. The function of those proteins is not known. The protein is Late embryogenesis abundant protein 3 of Arabidopsis thaliana (Mouse-ear cress).